The sequence spans 67 residues: Putative sodium channel alpha-toxin Acra5 (67 aa).

Residues 2–65 (RDGYIMIKDT…VYGDRGVICR (64 aa)) enclose the LCN-type CS-alpha/beta domain. 4 disulfide bridges follow: Cys13/Cys64, Cys17/Cys40, Cys26/Cys45, and Cys30/Cys47. Arg67 is a propeptide (removed by a carboxypeptidase).

The protein belongs to the long (4 C-C) scorpion toxin superfamily. Sodium channel inhibitor family. Alpha subfamily. As to expression, expressed by the venom gland.

The protein resides in the secreted. Functionally, alpha toxins bind voltage-independently at site-3 of sodium channels (Nav) and inhibit the inactivation of the activated channels, thereby blocking neuronal transmission. In Androctonus crassicauda (Arabian fat-tailed scorpion), this protein is Putative sodium channel alpha-toxin Acra5.